We begin with the raw amino-acid sequence, 210 residues long: Chorismate pyruvate-lyase (210 aa).

Belongs to the chorismate pyruvate-lyase type 2 family.

The catalysed reaction is chorismate = 4-hydroxybenzoate + pyruvate. Its function is as follows. Removes the pyruvyl group from chorismate to provide 4-hydroxybenzoate (4HB). Involved in the synthesis of glycosylated p-hydroxybenzoic acid methyl esters (p-HBADs) and phenolic glycolipids (PGL) that play important roles in the pathogenesis of mycobacterial infections. The sequence is that of Chorismate pyruvate-lyase from Mycobacterium leprae (strain TN).